A 258-amino-acid polypeptide reads, in one-letter code: Insulin-like growth factor-binding protein 4 (258 aa).

Residues Met1–Gly21 form the signal peptide. The region spanning Glu23 to Leu103 is the IGFBP N-terminal domain. 6 disulfides stabilise this stretch: Cys27-Cys53, Cys30-Cys55, Cys38-Cys56, Cys44-Cys59, Cys67-Cys80, and Cys74-Cys100. An N-linked (GlcNAc...) asparagine glycan is attached at Asn125. 4 disulfides stabilise this stretch: Cys131–Cys138, Cys174–Cys204, Cys215–Cys226, and Cys228–Cys249. Positions Gln171 to Cys249 constitute a Thyroglobulin type-1 domain. Ser255 is modified (phosphoserine).

Binds IGF2 more than IGF1.

It localises to the secreted. In terms of biological role, IGF-binding proteins prolong the half-life of the IGFs and have been shown to either inhibit or stimulate the growth promoting effects of the IGFs on cell culture. They alter the interaction of IGFs with their cell surface receptors. The chain is Insulin-like growth factor-binding protein 4 (IGFBP4) from Bos taurus (Bovine).